The following is a 67-amino-acid chain: Small ribosomal subunit protein eS27 (67 aa).

Cysteine 22, cysteine 25, cysteine 41, and cysteine 44 together coordinate Zn(2+). Residues 22-44 (CPDCGNEQVTFSHAAMVVRCLVC) form a C4-type zinc finger.

It belongs to the eukaryotic ribosomal protein eS27 family. As to quaternary structure, part of the 30S ribosomal subunit. The cofactor is Zn(2+).

This Pyrobaculum calidifontis (strain DSM 21063 / JCM 11548 / VA1) protein is Small ribosomal subunit protein eS27.